The chain runs to 453 residues: AP-4 complex subunit mu-1 (453 aa).

In terms of domain architecture, MHD spans 184–452 (KNEVFLDVVE…LSHSNAYVIR (269 aa)). Residues 383-403 (PGLQGPPSRGPSPSAPPLGLG) form a disordered region.

The protein belongs to the adaptor complexes medium subunit family. Adaptor protein complex 4 (AP-4) is a heterotetramer composed of two large adaptins (epsilon-type subunit AP4E1 and beta-type subunit AP4B1), a medium adaptin (mu-type subunit AP4M1) and a small adaptin (sigma-type AP4S1). Interacts with tyrosine-based sorting signals on the cytoplasmic tail of cargo proteins such as APP, ATG9A, LAMP2 and NAGPA. Interacts with the C-terminal domain of GRID2. Interacts with GRIA1 and GRIA2; the interaction is indirect via CACNG3. Interacts with CACNG3; CACNG3 associates GRIA1 and GRIA2 with the adaptor protein complex 4 (AP-4) to target them to the somatodendritic compartment of neurons. Interacts with HOOK1 and HOOK2; the interactions are direct, mediate the interaction between FTS-Hook-FHIP (FHF) complex and AP-4 and the perinuclear distribution of AP-4. High levels in the olfactory bulb, the cerebral cortex, the granule and Purkinje cell layers of the cerebellar cortex and the CA3 region of the hippocampus. Low levels found in molecular layer of cerebellum.

Its subcellular location is the golgi apparatus. It localises to the trans-Golgi network membrane. The protein resides in the early endosome. Component of the adaptor protein complex 4 (AP-4). Adaptor protein complexes are vesicle coat components involved both in vesicle formation and cargo selection. They control the vesicular transport of proteins in different trafficking pathways. AP-4 forms a non clathrin-associated coat on vesicles departing the trans-Golgi network (TGN) and may be involved in the targeting of proteins from the trans-Golgi network (TGN) to the endosomal-lysosomal system. It is also involved in protein sorting to the basolateral membrane in epithelial cells and the proper asymmetric localization of somatodendritic proteins in neurons. Within AP-4, the mu-type subunit AP4M1 is directly involved in the recognition and binding of tyrosine-based sorting signals found in the cytoplasmic part of cargos. The adaptor protein complex 4 (AP-4) may also recognize other types of sorting signal. The sequence is that of AP-4 complex subunit mu-1 from Rattus norvegicus (Rat).